A 325-amino-acid chain; its full sequence is Aquaporin-8 (325 aa).

The Cytoplasmic segment spans residues 1 to 10 (MALRSPARDY). Residues 11 to 31 (LVSMIGELVGTFLFLFFAFAA) traverse the membrane as a helical segment. Over 32–52 (AQTANQPNGTKPLTPNATDTS) the chain is Extracellular. Asparagine 39 and asparagine 47 each carry an N-linked (GlcNAc...) asparagine glycan. A helical transmembrane segment spans residues 53-73 (KLLYIALAFGASLAANVWVFF). At 74-100 (RVSGGQFNPAVTLALVLIRAVSPTKAL) the chain is on the cytoplasmic side. The short motif at 81-83 (NPA) is the NPA 1 element. A helical transmembrane segment spans residues 101 to 121 (ILIPAQLVGGSLAAAAVKGII). Over 122–140 (PGDDILFAVSLGPGVANVQ) the chain is Extracellular. The helical transmembrane segment at 141–161 (GLFIELLLTFMLVFTILMLVA) threads the bilayer. Residues 162 to 167 (EKTKST) are Cytoplasmic-facing. Residues 168 to 188 (FVAPIGIGFSLFIGHLVGIFW) form a helical membrane-spanning segment. The Extracellular portion of the chain corresponds to 189–212 (TGAGINPARAFSPALIQASFPSYH). The NPA 2 signature appears at 194 to 196 (NPA). Residues 213–233 (WIYWLGPALGSFLAAGLYLGL) form a helical membrane-spanning segment. Residues 234 to 325 (KEMKYELVGG…GSPDSTDLPT (92 aa)) are Cytoplasmic-facing. Disordered regions lie at residues 279-298 (LGQF…LERG) and 305-325 (EDDP…DLPT). The span at 286–298 (TEGHRSPVDLERG) shows a compositional bias: basic and acidic residues.

This sequence belongs to the MIP/aquaporin (TC 1.A.8) family.

The protein localises to the cell membrane. It carries out the reaction H2O2(out) = H2O2(in). The catalysed reaction is H2O(in) = H2O(out). Plasma membrane water channel that regulates the reactive oxygen species (ROS)-signaling pathway through its capacity to act as a membrane channel for hydrogen peroxide uptake. Required for the formation of infection structures and infection, especially on host leaves where it is essential for the penetration into the host. Regulates the expression of proteins related to redox-regulation and intracellular signal transduction and plays a role in the distribution of mitochondria in the hyphae. The polypeptide is Aquaporin-8 (Botryotinia fuckeliana (strain B05.10) (Noble rot fungus)).